We begin with the raw amino-acid sequence, 1665 residues long: Cortactin-binding protein 2 (1665 aa).

Positions 120 to 277 (RKMQERMSTQ…EQLKRGNDSK (158 aa)) form a coiled coil. Disordered stretches follow at residues 203–222 (EKKKTNELEEELSAEKRRST), 368–480 (VSSV…SPTS), and 500–620 (RFTS…PSID). Composition is skewed to polar residues over residues 388–399 (SIGSTPDLASST) and 410–429 (TGQTSGIASQNYSQASSMHS). A compositionally biased stretch (low complexity) spans 455–469 (QGNANDQDQNGNTTQ). Polar residues predominate over residues 470 to 480 (SPPSRDVSPTS). R500 carries the post-translational modification Asymmetric dimethylarginine. ANK repeat units lie at residues 711–741 (GRPTLLQQAAAQGNVTLLSMLLNEEGLDINY), 745–774 (DGHSALYSAAKNGHTDCVRLLLNAKAQIDA), 778–807 (NGFTPLCAAAAQGHFECVELLIAYHANIDH), 811–840 (GGQTPLYLACKNGNKECIKVLLEAGTDRSV), and 844–873 (DGWTPVHAAVDTGNVDSLKLLMYHRAPTLG). The segment at 875–902 (SLNEEEPEPGAFDLDQGQEGSEGTAKPV) is disordered. An ANK 6 repeat occupies 914–944 (EGWTAAHIAASKGFKNCLEILCRHGGLEPER). The tract at residues 1447 to 1495 (CSKKKGENGAWRKVSTNPRKKSGRFSSPTWSKPDLGEEGTKNKTMSQPN) is disordered. At S1526 the chain carries Phosphoserine. A disordered region spans residues 1575–1665 (NNLRMPVSQK…KNEQVQKPNK (91 aa)). Composition is skewed to low complexity over residues 1590–1604 (SSHQTTKRSTSTSKT) and 1623–1641 (SQCSQNTKRSSSSSNTRQT). Positions 1656 to 1665 (KNEQVQKPNK) are enriched in polar residues.

In terms of assembly, interacts with CTTN/cortactin SH3 domain. Interacts with STRN, STRN4/zinedin and MOB4/phocein; this interactions mediate the association with the STRIPAK core complex and may regulate dendritic spine distribution of the STRIPAK complex in hippocampal neurons. Activation of glutamate receptors weakens the interaction with STRN and STRN4.

Its subcellular location is the cytoplasm. It is found in the cell cortex. The protein localises to the cell projection. The protein resides in the dendritic spine. Regulates the dendritic spine distribution of CTTN/cortactin in hippocampal neurons, and thus controls dendritic spinogenesis and dendritic spine maintenance. Associates with the striatin-interacting phosphatase and kinase (STRIPAK) core complex to regulate dendritic spine distribution of the STRIPAK complex in hippocampal neurons. The polypeptide is Cortactin-binding protein 2 (CTTNBP2) (Dasypus novemcinctus (Nine-banded armadillo)).